The chain runs to 271 residues: MNWSVFEGLLSGVNKYSTAFGRIWLSLVFVFRVLVYLVTAERVWGDDQKDFDCNTRQPGCTNVCYDEFFPVSHVRLWALQLILVTCPSLLVVMHVAYRKAREKKYQQEVGKGYLYPNPGKKRGGLWWTYVCSLLFKATIDIIFLYLFHAFYPRYTLPSMVKCHSAPCPNTVDCFIAKPSEKNIFIVFMLVTAIVCILLNLVELLYLVIKRCSECAPAKRPPTAHAKNDPNWANPSSKEKDFLSSDLIFLGSDTHPPLLPDRPRAHVKKTIL.

Residues 1–20 are Cytoplasmic-facing; sequence MNWSVFEGLLSGVNKYSTAF. Residues 21 to 40 traverse the membrane as a helical segment; that stretch reads GRIWLSLVFVFRVLVYLVTA. At 41–75 the chain is on the extracellular side; sequence ERVWGDDQKDFDCNTRQPGCTNVCYDEFFPVSHVR. The helical transmembrane segment at 76-98 threads the bilayer; the sequence is LWALQLILVTCPSLLVVMHVAYR. The Cytoplasmic segment spans residues 99–124; sequence KAREKKYQQEVGKGYLYPNPGKKRGG. A helical transmembrane segment spans residues 125 to 147; the sequence is LWWTYVCSLLFKATIDIIFLYLF. The Extracellular segment spans residues 148–182; that stretch reads HAFYPRYTLPSMVKCHSAPCPNTVDCFIAKPSEKN. Residues 183-205 form a helical membrane-spanning segment; that stretch reads IFIVFMLVTAIVCILLNLVELLY. The Cytoplasmic segment spans residues 206–271; that stretch reads LVIKRCSECA…PRAHVKKTIL (66 aa). Positions 217–237 are disordered; that stretch reads AKRPPTAHAKNDPNWANPSSK.

The protein belongs to the connexin family. Beta-type (group I) subfamily. As to quaternary structure, a connexon is composed of a hexamer of connexins. As to expression, expressed in skin.

The protein localises to the cell membrane. Its subcellular location is the cell junction. It localises to the gap junction. Functionally, one gap junction consists of a cluster of closely packed pairs of transmembrane channels, the connexons, through which materials of low MW diffuse from one cell to a neighboring cell. This is Gap junction beta-5 protein (Gjb5) from Rattus norvegicus (Rat).